Reading from the N-terminus, the 128-residue chain is Glycine cleavage system H protein (128 aa).

Residues 24–106 (VYTVGITEHA…YAEGFLFQIK (83 aa)) form the Lipoyl-binding domain. Residue Lys65 is modified to N6-lipoyllysine.

It belongs to the GcvH family. As to quaternary structure, the glycine cleavage system is composed of four proteins: P, T, L and H. It depends on (R)-lipoate as a cofactor.

Its function is as follows. The glycine cleavage system catalyzes the degradation of glycine. The H protein shuttles the methylamine group of glycine from the P protein to the T protein. This is Glycine cleavage system H protein from Serratia proteamaculans (strain 568).